A 109-amino-acid polypeptide reads, in one-letter code: ATPase inhibitor mai-2, mitochondrial (109 aa).

Disordered stretches follow at residues R17–D39 and Q73–R95. Positions G21–G35 are enriched in gly residues. Residues G45–E109 adopt a coiled-coil conformation.

Belongs to the ATPase inhibitor family.

The protein localises to the mitochondrion. Functionally, thought to be a regulatory component of the ATP-synthesizing complex in the mitochondria. This chain is ATPase inhibitor mai-2, mitochondrial, found in Caenorhabditis briggsae.